A 95-amino-acid chain; its full sequence is MLKPLGDRVLVEIIEEAEQKTAGGLYVPDSAKEKSQRGKVVAVGTGKTLDNGTKVAMEVKEGDTVYFAKYGGTEVSLEGKNYSLLSERDLLAIVE.

Belongs to the GroES chaperonin family. Heptamer of 7 subunits arranged in a ring. Interacts with the chaperonin GroEL.

It localises to the cytoplasm. In terms of biological role, together with the chaperonin GroEL, plays an essential role in assisting protein folding. The GroEL-GroES system forms a nano-cage that allows encapsulation of the non-native substrate proteins and provides a physical environment optimized to promote and accelerate protein folding. GroES binds to the apical surface of the GroEL ring, thereby capping the opening of the GroEL channel. The chain is Co-chaperonin GroES from Deinococcus radiodurans (strain ATCC 13939 / DSM 20539 / JCM 16871 / CCUG 27074 / LMG 4051 / NBRC 15346 / NCIMB 9279 / VKM B-1422 / R1).